Consider the following 125-residue polypeptide: Small ribosomal subunit protein eS8 (125 aa).

Polar residues predominate over residues 1-11 (MAISQGKSTRL). The disordered stretch occupies residues 1-38 (MAISQGKSTRLPSGARNVANRGKRKAELGRDPAETRVD). The segment covering 25–38 (KAELGRDPAETRVD) has biased composition (basic and acidic residues).

This sequence belongs to the eukaryotic ribosomal protein eS8 family. In terms of assembly, part of the 30S ribosomal subunit.

The sequence is that of Small ribosomal subunit protein eS8 from Methanobrevibacter smithii (strain ATCC 35061 / DSM 861 / OCM 144 / PS).